A 180-amino-acid chain; its full sequence is Ribosome maturation factor RimM (180 aa).

Residues 103–176 (GDIWWDRDLV…RIVVDPPPGL (74 aa)) enclose the PRC barrel domain.

The protein belongs to the RimM family. Binds ribosomal protein uS19.

The protein localises to the cytoplasm. Functionally, an accessory protein needed during the final step in the assembly of 30S ribosomal subunit, possibly for assembly of the head region. Essential for efficient processing of 16S rRNA. May be needed both before and after RbfA during the maturation of 16S rRNA. It has affinity for free ribosomal 30S subunits but not for 70S ribosomes. This Frankia alni (strain DSM 45986 / CECT 9034 / ACN14a) protein is Ribosome maturation factor RimM.